Here is a 204-residue protein sequence, read N- to C-terminus: Probable GTP-binding protein EngB (204 aa).

The tract at residues 1 to 21 is disordered; it reads MKVSSAEFVTSGTRPAHYPPP. An EngB-type G domain is found at 22–194; the sequence is ELPEVAFAGR…WARIEVMLAA (173 aa). GTP is bound by residues 30–37, 57–61, 75–78, 142–145, and 173–175; these read GRSNVGKS, GRTQL, DLPG, TKCD, and FSA. Mg(2+) is bound by residues Ser37 and Thr59.

This sequence belongs to the TRAFAC class TrmE-Era-EngA-EngB-Septin-like GTPase superfamily. EngB GTPase family. Mg(2+) is required as a cofactor.

Its function is as follows. Necessary for normal cell division and for the maintenance of normal septation. The protein is Probable GTP-binding protein EngB of Geobacter metallireducens (strain ATCC 53774 / DSM 7210 / GS-15).